Consider the following 101-residue polypeptide: Small ribosomal subunit protein uS14 (101 aa).

It belongs to the universal ribosomal protein uS14 family. As to quaternary structure, part of the 30S ribosomal subunit. Contacts proteins S3 and S10.

Its function is as follows. Binds 16S rRNA, required for the assembly of 30S particles and may also be responsible for determining the conformation of the 16S rRNA at the A site. In Sodalis glossinidius (strain morsitans), this protein is Small ribosomal subunit protein uS14.